Here is a 202-residue protein sequence, read N- to C-terminus: Large ribosomal subunit protein uL4 (202 aa).

Positions 42 to 52 (GTKAQKSRSQV) are enriched in polar residues. The interval 42-70 (GTKAQKSRSQVSGTTKKSKKQKGGGARHG) is disordered.

Belongs to the universal ribosomal protein uL4 family. As to quaternary structure, part of the 50S ribosomal subunit.

In terms of biological role, one of the primary rRNA binding proteins, this protein initially binds near the 5'-end of the 23S rRNA. It is important during the early stages of 50S assembly. It makes multiple contacts with different domains of the 23S rRNA in the assembled 50S subunit and ribosome. Its function is as follows. Forms part of the polypeptide exit tunnel. This Xylella fastidiosa (strain Temecula1 / ATCC 700964) protein is Large ribosomal subunit protein uL4.